Reading from the N-terminus, the 71-residue chain is UPF0435 protein SERP1418 (71 aa).

This sequence belongs to the UPF0435 family.

This Staphylococcus epidermidis (strain ATCC 35984 / DSM 28319 / BCRC 17069 / CCUG 31568 / BM 3577 / RP62A) protein is UPF0435 protein SERP1418.